Reading from the N-terminus, the 66-residue chain is Ocellatin-PT1 (66 aa).

An N-terminal signal peptide occupies residues 1–22 (MAFLKKSLFLVLFLGLVSLSIC). A propeptide spanning residues 23 to 39 (DEEKRQDEDDDDDDDEE) is cleaved from the precursor. At valine 66 the chain carries Valine amide.

Expressed by the skin glands.

The protein localises to the secreted. In terms of biological role, has antibacterial activity against Gram-negative bacterium E.coli ATCC 25922 (MIC=300 uM) but not against S.pneumoniae ATCC 700603, S.choleraesuis ATCC 14028 or Gram-positive bacterium S.aureus ATCC 29313. Shows virtually no hemolytic activity and no cytotoxicity. The protein is Ocellatin-PT1 of Leptodactylus pustulatus (Ceara white-lipped frog).